A 281-amino-acid chain; its full sequence is Probable protein phosphatase 2C 9 (281 aa).

Positions 33–280 (KYGFSLVKGK…DDISCVVVRF (248 aa)) constitute a PPM-type phosphatase domain. Residues D70, G71, D232, and D271 each contribute to the Mn(2+) site.

The protein belongs to the PP2C family. Interacts with phytochromes (via N-terminus). The cofactor is Mg(2+). Mn(2+) serves as cofactor.

The protein resides in the nucleus. The enzyme catalyses O-phospho-L-seryl-[protein] + H2O = L-seryl-[protein] + phosphate. It carries out the reaction O-phospho-L-threonyl-[protein] + H2O = L-threonyl-[protein] + phosphate. Functionally, involved in the regulation of phytochrome signaling. May regulate phytochrome-interacting factor 3 (PIF3) through the dephosphorylation of phytochrome. The protein is Probable protein phosphatase 2C 9 of Arabidopsis thaliana (Mouse-ear cress).